A 346-amino-acid chain; its full sequence is Uroporphyrinogen decarboxylase (346 aa).

Residues 23-27 (RQAGR), D72, Y149, T204, and H318 each bind substrate.

The protein belongs to the uroporphyrinogen decarboxylase family. In terms of assembly, homodimer.

It is found in the cytoplasm. It carries out the reaction uroporphyrinogen III + 4 H(+) = coproporphyrinogen III + 4 CO2. Its pathway is porphyrin-containing compound metabolism; protoporphyrin-IX biosynthesis; coproporphyrinogen-III from 5-aminolevulinate: step 4/4. Functionally, catalyzes the decarboxylation of four acetate groups of uroporphyrinogen-III to yield coproporphyrinogen-III. The sequence is that of Uroporphyrinogen decarboxylase from Synechococcus sp. (strain JA-2-3B'a(2-13)) (Cyanobacteria bacterium Yellowstone B-Prime).